The primary structure comprises 107 residues: U-scoloptoxin(18)-Er1a (107 aa).

An N-terminal signal peptide occupies residues 1 to 21 (MQRFLCLVACSVVLLVLGIVA).

Belongs to the scoloptoxin-18 family. Contains 5 disulfide bonds. As to expression, expressed by the venom gland.

The protein localises to the secreted. The chain is U-scoloptoxin(18)-Er1a from Ethmostigmus rubripes (Giant centipede).